The sequence spans 103 residues: Putative truncated guanine nucleotide exchange factor YLL017W (103 aa).

One can recognise an SH3 domain in the interval 26–97 (QPIDVVECTY…PPSFYTVHSK (72 aa)).

The sequence is that of Putative truncated guanine nucleotide exchange factor YLL017W from Saccharomyces cerevisiae (strain ATCC 204508 / S288c) (Baker's yeast).